The primary structure comprises 471 residues: Argininosuccinate lyase (471 aa).

Belongs to the lyase 1 family. Argininosuccinate lyase subfamily.

It is found in the cytoplasm. The enzyme catalyses 2-(N(omega)-L-arginino)succinate = fumarate + L-arginine. It functions in the pathway amino-acid biosynthesis; L-arginine biosynthesis; L-arginine from L-ornithine and carbamoyl phosphate: step 3/3. The chain is Argininosuccinate lyase from Paramagnetospirillum magneticum (strain ATCC 700264 / AMB-1) (Magnetospirillum magneticum).